The sequence spans 334 residues: N-acetyl-gamma-glutamyl-phosphate reductase (334 aa).

The active site involves cysteine 154.

Belongs to the NAGSA dehydrogenase family. Type 1 subfamily.

It localises to the cytoplasm. It catalyses the reaction N-acetyl-L-glutamate 5-semialdehyde + phosphate + NADP(+) = N-acetyl-L-glutamyl 5-phosphate + NADPH + H(+). Its pathway is amino-acid biosynthesis; L-arginine biosynthesis; N(2)-acetyl-L-ornithine from L-glutamate: step 3/4. Catalyzes the NADPH-dependent reduction of N-acetyl-5-glutamyl phosphate to yield N-acetyl-L-glutamate 5-semialdehyde. This Salmonella typhi protein is N-acetyl-gamma-glutamyl-phosphate reductase.